Reading from the N-terminus, the 241-residue chain is NAD-dependent protein deacylase (241 aa).

Residues 1 to 237 enclose the Deacetylase sirtuin-type domain; that stretch reads MNFPYRNIVV…PKLVDEILAL (237 aa). 13–32 contributes to the NAD(+) binding site; that stretch reads GAGISAESGIQTFRAQDGLW. Substrate is bound by residues tyrosine 57 and arginine 60. 94 to 97 is a binding site for NAD(+); it reads QNID. Histidine 112 serves as the catalytic Proton acceptor. Residues cysteine 120 and cysteine 139 each coordinate Zn(2+). NAD(+) contacts are provided by residues 179 to 181, 205 to 207, and alanine 223; these read GTS and NLE.

This sequence belongs to the sirtuin family. Class III subfamily. Monomer. It depends on Zn(2+) as a cofactor.

Its subcellular location is the cytoplasm. The protein resides in the host cytoplasm. The protein localises to the host cytosol. It localises to the host nucleus. The enzyme catalyses N(6)-acetyl-L-lysyl-[protein] + NAD(+) + H2O = 2''-O-acetyl-ADP-D-ribose + nicotinamide + L-lysyl-[protein]. The catalysed reaction is N(6)-succinyl-L-lysyl-[protein] + NAD(+) + H2O = 2''-O-succinyl-ADP-D-ribose + nicotinamide + L-lysyl-[protein]. Functionally, NAD-dependent lysine deacetylase and desuccinylase that specifically removes acetyl and succinyl groups on target proteins. Modulates the activities of several proteins which are inactive in their acylated form. In the intracellular pathogen V.parahaemolyticus, this enzyme regulates host response during infection by induction of host histone deacetylation; it specifically causes deacetylation of histone lysine residues H3K56, H3K9, H3K18 and H4K16 which results in transcriptional repression of several host genes involved in epigenetic regulation, immune response, and autophagy. The protein is NAD-dependent protein deacylase of Vibrio parahaemolyticus serotype O3:K6 (strain RIMD 2210633).